We begin with the raw amino-acid sequence, 251 residues long: tRNA (guanine-N(7)-)-methyltransferase (251 aa).

S-adenosyl-L-methionine-binding positions include glycine 71, 94–95, 128–129, and leucine 148; these read EL and NS. Aspartate 151 is an active-site residue. 226–228 contacts S-adenosyl-L-methionine; it reads TEE.

The protein belongs to the class I-like SAM-binding methyltransferase superfamily. TrmB family.

It localises to the nucleus. It carries out the reaction guanosine(46) in tRNA + S-adenosyl-L-methionine = N(7)-methylguanosine(46) in tRNA + S-adenosyl-L-homocysteine. The protein operates within tRNA modification; N(7)-methylguanine-tRNA biosynthesis. Functionally, catalyzes the formation of N(7)-methylguanine at position 46 (m7G46) in tRNA. The protein is tRNA (guanine-N(7)-)-methyltransferase of Arabidopsis thaliana (Mouse-ear cress).